A 1224-amino-acid polypeptide reads, in one-letter code: Serine/threonine-protein kinase CST20 (1224 aa).

Residues 1–18 (MSILSENNPTPTSITDPN) are compositionally biased toward polar residues. Disordered regions lie at residues 1-378 (MSIL…TAHN) and 403-464 (TNSS…HSQE). Composition is skewed to low complexity over residues 57–70 (NTTSANTSSLSLGS) and 95–119 (DSGSGDIDDSQQSHNNNNNESNPES). The span at 144 to 155 (HQGDDSDNEKQY) shows a compositional bias: basic and acidic residues. Polar residues-rich tracts occupy residues 169 to 191 (DSYSLGTLESPGTLNALETNNVS), 201 to 218 (TSSLEDLSLSLQHQNENA), and 231 to 240 (PTSKTSSFHD). Residues 242–251 (SSVISSSTSV) show a composition bias toward low complexity. Polar residues-rich tracts occupy residues 256-271 (SNPTSTRGSHLSSYKS) and 305-324 (DTLSSATNSPNLLRNDTLQG). Composition is skewed to low complexity over residues 343–375 (NTSATSRNTSGTSTSTVVKNSRSGTSKSTSTST) and 433–462 (KVRGVFSSMFGKNKSTSSSSSSNSGSNSHS). The 14-residue stretch at 469–482 (ISTPFNAKHLAHVG) folds into the CRIB domain. Disordered regions lie at residues 539–825 (FHFD…ALAD) and 861–913 (LREK…KQAA). Polar residues predominate over residues 544–555 (NKSSSSGWSNEN). Residues 564–575 (SNSGSGSGGGGA) are compositionally biased toward gly residues. A compositionally biased stretch (polar residues) spans 598–607 (ITPSQSMPTK). Basic and acidic residues predominate over residues 608–622 (TESKQSENQHPHEDN). Residues 623–636 (ATQYTPRTPTSHVQ) are compositionally biased toward polar residues. 3 stretches are compositionally biased toward low complexity: residues 664 to 677 (PSSQSLPRSDSQSD), 690 to 704 (SPSKIKIRSISSKSL), and 730 to 743 (SIPKSKSHSASLSS). A compositionally biased stretch (polar residues) spans 744–755 (QLRPATNGSTTA). The segment covering 783-801 (APPPPPSAPPAPPVPPAPP) has biased composition (pro residues). Polar residues predominate over residues 805–820 (LSEQTSEIPQQRTAPS). A compositionally biased stretch (basic and acidic residues) spans 861 to 870 (LREKNERQNR). Residues 871–886 (QQETGQNNADTASGGS) show a composition bias toward polar residues. Residues 947 to 1199 (YVDLVKIGQG…ADELLHDNFI (253 aa)) enclose the Protein kinase domain. Residues 953-961 (IGQGASGGV) and K977 each bind ATP. D1067 functions as the Proton acceptor in the catalytic mechanism.

The protein belongs to the protein kinase superfamily. STE Ser/Thr protein kinase family. STE20 subfamily.

Its subcellular location is the cytoplasm. It localises to the nucleus. It catalyses the reaction L-seryl-[protein] + ATP = O-phospho-L-seryl-[protein] + ADP + H(+). It carries out the reaction L-threonyl-[protein] + ATP = O-phospho-L-threonyl-[protein] + ADP + H(+). Its function is as follows. MAP4K component of the MAPK pathway required for the mating pheromone response, and the regulation of cell polarity and cell cycle. Phosphorylates histone H2B to form H2BS10ph. Required for hyphal formation and virulence. This Candida albicans (strain WO-1) (Yeast) protein is Serine/threonine-protein kinase CST20 (CST20).